The following is a 354-amino-acid chain: Probable L-ascorbate-6-phosphate lactonase UlaG (354 aa).

Belongs to the UlaG family. It depends on a divalent metal cation as a cofactor.

It localises to the cytoplasm. The catalysed reaction is L-ascorbate 6-phosphate + H2O = 3-dehydro-L-gulonate 6-phosphate. It participates in cofactor degradation; L-ascorbate degradation; D-xylulose 5-phosphate from L-ascorbate: step 1/4. Its function is as follows. Probably catalyzes the hydrolysis of L-ascorbate-6-P into 3-keto-L-gulonate-6-P. Is essential for L-ascorbate utilization under anaerobic conditions. The polypeptide is Probable L-ascorbate-6-phosphate lactonase UlaG (Salmonella heidelberg (strain SL476)).